The primary structure comprises 995 residues: Epididymis-specific alpha-mannosidase (995 aa).

The N-terminal stretch at 1-21 (MGPHSWLPLFMQLALLGPQWA) is a signal peptide. Zn(2+)-binding residues include His-36, Asp-38, and Asp-151. The Nucleophile role is filled by Asp-151. A glycan (N-linked (GlcNAc...) asparagine) is linked at Asn-285. His-411 provides a ligand contact to Zn(2+). N-linked (GlcNAc...) asparagine glycosylation is found at Asn-593, Asn-625, Asn-657, Asn-733, Asn-793, Asn-875, and Asn-977. Positions 956–977 (TEDGHHHRGSSRRPLPPLRGPN) are disordered.

This sequence belongs to the glycosyl hydrolase 38 family. Zn(2+) serves as cofactor. Post-translationally, processed into a 27 kDa fragment localized on the equatorial segment and the apical rim of the head of mature sperm. In terms of tissue distribution, specific to the caput and corpus of the epididymis.

The protein localises to the secreted. The enzyme catalyses Hydrolysis of terminal, non-reducing alpha-D-mannose residues in alpha-D-mannosides.. In terms of biological role, can digest both p-nitro-phenyl-alpha-D-mannoside and high mannose oligosaccharide (Man(8)-GlcNAc(2)). May be involved in sperm maturation. Has a possible role in specific sperm-egg interaction since sperm surface mannosidase acts like a receptor for mannose-containing oligosaccharides located on the zona pellucida. The protein is Epididymis-specific alpha-mannosidase (MAN2B2) of Sus scrofa (Pig).